We begin with the raw amino-acid sequence, 506 residues long: DEAD-box ATP-dependent RNA helicase CshA (506 aa).

The Q motif motif lies at 2 to 30; it reads QNFKELGISDNTVQSLESMGFKEPTPIQK. The 171-residue stretch at 33-203 folds into the Helicase ATP-binding domain; sequence IPYALQGIDI…QQFMKSPKII (171 aa). Residue 46–53 participates in ATP binding; it reads AQTGTGKT. Positions 150–153 match the DEAD box motif; that stretch reads DEAD. Residues 214–375 enclose the Helicase C-terminal domain; the sequence is QIEEFYTIVK…LRPPHRKEVL (162 aa). A disordered region spans residues 436 to 506; sequence EKPLSRKGRN…KGRTFADHQK (71 aa). Residues 468 to 480 are compositionally biased toward basic residues; sequence KRSKGYSSKKKST.

This sequence belongs to the DEAD box helicase family. CshA subfamily. Oligomerizes, may be a member of the RNA degradosome.

It is found in the cytoplasm. The catalysed reaction is ATP + H2O = ADP + phosphate + H(+). Its function is as follows. DEAD-box RNA helicase possibly involved in RNA degradation. Unwinds dsRNA in both 5'- and 3'-directions, has RNA-dependent ATPase activity. The sequence is that of DEAD-box ATP-dependent RNA helicase CshA from Staphylococcus aureus (strain bovine RF122 / ET3-1).